A 275-amino-acid chain; its full sequence is Tryptophan synthase alpha chain (275 aa).

Catalysis depends on proton acceptor residues glutamate 51 and glutamate 62.

Belongs to the TrpA family. As to quaternary structure, tetramer of two alpha and two beta chains.

The catalysed reaction is (1S,2R)-1-C-(indol-3-yl)glycerol 3-phosphate + L-serine = D-glyceraldehyde 3-phosphate + L-tryptophan + H2O. Its pathway is amino-acid biosynthesis; L-tryptophan biosynthesis; L-tryptophan from chorismate: step 5/5. In terms of biological role, the alpha subunit is responsible for the aldol cleavage of indoleglycerol phosphate to indole and glyceraldehyde 3-phosphate. In Caulobacter sp. (strain K31), this protein is Tryptophan synthase alpha chain.